The following is a 408-amino-acid chain: 3-ketoacyl-CoA thiolase B, peroxisomal (408 aa).

Cys112 functions as the Acyl-thioester intermediate in the catalytic mechanism. Active-site proton acceptor residues include His366 and Cys394.

This sequence belongs to the thiolase-like superfamily. Thiolase family. As to quaternary structure, homodimer.

It is found in the peroxisome. The enzyme catalyses an acyl-CoA + acetyl-CoA = a 3-oxoacyl-CoA + CoA. It functions in the pathway lipid metabolism; fatty acid metabolism. The protein is 3-ketoacyl-CoA thiolase B, peroxisomal of Candida tropicalis (Yeast).